The sequence spans 149 residues: Calmodulin-1 (149 aa).

At Ala2 the chain carries N-acetylalanine. 4 consecutive EF-hand domains span residues 8–43, 44–79, 81–116, and 117–149; these read DQIS…LGQN, PTEA…KMKD, DSEE…LGEK, and LTDE…MMAK. 14 residues coordinate Ca(2+): Asp21, Asp23, Asp25, Cys27, Glu32, Asp57, Asp59, Asn61, Thr63, Glu68, Asp94, Asp96, Asn98, and Glu105. Residue Lys116 is modified to N6,N6,N6-trimethyllysine. Residues Asp130, Asp132, Asp134, Gln136, and Glu141 each coordinate Ca(2+).

This sequence belongs to the calmodulin family.

Calmodulin mediates the control of a large number of enzymes, ion channels and other proteins by Ca(2+). Among the enzymes to be stimulated by the calmodulin-Ca(2+) complex are a number of protein kinases and phosphatases. This chain is Calmodulin-1 (CAM81), found in Petunia hybrida (Petunia).